Here is a 400-residue protein sequence, read N- to C-terminus: WD repeat and FYVE domain-containing protein 2 (400 aa).

6 WD repeats span residues 22 to 61, 66 to 105, 112 to 150, 153 to 192, 197 to 236, and 240 to 279; these read GSQE…QYWP, AMPS…NKMT, AHQS…QRLG, RTSA…CTLL, GHTG…GTAI, and GHND…QETP. The FYVE-type zinc-finger motif lies at 281–352; that stretch reads WLDSDSCQKC…VCDSCHEAIT (72 aa). Zn(2+)-binding residues include Cys-287, Cys-290, Cys-314, Cys-317, Cys-322, Cys-325, Cys-344, and Cys-347. Residues 364-399 form a WD 7 repeat; sequence DSKHNIVHVHFDATRGWLLTSGTDKVIKLWDMTPVV.

As to quaternary structure, homodimer. Interacts (via WD repeats 1-3) with AKT1, AKT2, PRKCZ and PRKCI. Interacts with VAMP2. Forms a complex with VAMP2 and PRKCZ. Interacts with FOXO1. Forms a complex with AKT1 and FOXO1. As to expression, highly expressed in the brain (at protein level).

It is found in the endosome. The protein localises to the early endosome. Its subcellular location is the cytoplasm. Acts in an adapter protein-like fashion to mediate the interaction between the kinase PRKCZ and its substrate VAMP2 and increases the PRKCZ-dependent phosphorylation of VAMP2. Positively regulates adipocyte differentiation, by facilitating the phosphorylation and thus inactivation of the anti-adipogenetic transcription factor FOXO1 by the kinase AKT1. Plays a role in endosomal control of AKT2 signaling; required for insulin-stimulated AKT2 phosphorylation and glucose uptake and insulin-stimulated phosphorylation of AKT2 substrates. Participates in transferrin receptor endocytosis. This chain is WD repeat and FYVE domain-containing protein 2 (Wdfy2), found in Mus musculus (Mouse).